Reading from the N-terminus, the 352-residue chain is [LysW]-L-2-aminoadipate/[LysW]-L-glutamate phosphate reductase (352 aa).

NADP(+) is bound at residue 13–16 (SGYT). Cys-153 is a catalytic residue. NADP(+) is bound at residue Asn-319.

This sequence belongs to the NAGSA dehydrogenase family. Type 1 subfamily. LysY sub-subfamily.

The protein resides in the cytoplasm. It catalyses the reaction [amino-group carrier protein]-C-terminal-N-(1-carboxy-5-oxopentan-1-yl)-L-glutamine + phosphate + NADP(+) = [amino-group carrier protein]-C-terminal-N-(1-carboxy-5-phosphooxy-5-oxopentan-1-yl)-L-glutamine + NADPH + H(+). The enzyme catalyses [amino-group carrier protein]-C-terminal-gamma-(L-glutamyl-5-semialdehyde)-L-glutamate + phosphate + NADP(+) = [amino-group carrier protein]-C-terminal-gamma-(5-phospho-L-glutamyl)-L-glutamate + NADPH + H(+). Its pathway is amino-acid biosynthesis; L-lysine biosynthesis via AAA pathway; L-lysine from L-alpha-aminoadipate (Thermus route): step 3/5. The protein operates within amino-acid biosynthesis; L-arginine biosynthesis. Functionally, involved in both the arginine and lysine biosynthetic pathways. This Saccharolobus solfataricus (strain ATCC 35092 / DSM 1617 / JCM 11322 / P2) (Sulfolobus solfataricus) protein is [LysW]-L-2-aminoadipate/[LysW]-L-glutamate phosphate reductase.